Reading from the N-terminus, the 440-residue chain is UDP-N-acetylmuramoylalanine--D-glutamate ligase (440 aa).

Position 113-119 (113-119 (GTNGKST)) interacts with ATP.

It belongs to the MurCDEF family.

It is found in the cytoplasm. It carries out the reaction UDP-N-acetyl-alpha-D-muramoyl-L-alanine + D-glutamate + ATP = UDP-N-acetyl-alpha-D-muramoyl-L-alanyl-D-glutamate + ADP + phosphate + H(+). It participates in cell wall biogenesis; peptidoglycan biosynthesis. Functionally, cell wall formation. Catalyzes the addition of glutamate to the nucleotide precursor UDP-N-acetylmuramoyl-L-alanine (UMA). In Buchnera aphidicola subsp. Acyrthosiphon pisum (strain Tuc7), this protein is UDP-N-acetylmuramoylalanine--D-glutamate ligase.